Reading from the N-terminus, the 225-residue chain is Protein-L-isoaspartate O-methyltransferase (225 aa).

The active site involves S75.

Belongs to the methyltransferase superfamily. L-isoaspartyl/D-aspartyl protein methyltransferase family.

The protein localises to the cytoplasm. It carries out the reaction [protein]-L-isoaspartate + S-adenosyl-L-methionine = [protein]-L-isoaspartate alpha-methyl ester + S-adenosyl-L-homocysteine. In terms of biological role, catalyzes the methyl esterification of L-isoaspartyl residues in peptides and proteins that result from spontaneous decomposition of normal L-aspartyl and L-asparaginyl residues. It plays a role in the repair and/or degradation of damaged proteins. The chain is Protein-L-isoaspartate O-methyltransferase from Xanthomonas axonopodis pv. citri (strain 306).